We begin with the raw amino-acid sequence, 203 residues long: Outer-membrane lipoprotein LolB (203 aa).

Residues 1-20 form the signal peptide; that stretch reads MNRSRRLALLCLGVPLLLQA. Cys-21 is lipidated: N-palmitoyl cysteine. The S-diacylglycerol cysteine moiety is linked to residue Cys-21.

It belongs to the LolB family. Monomer.

The protein localises to the cell outer membrane. Functionally, plays a critical role in the incorporation of lipoproteins in the outer membrane after they are released by the LolA protein. The sequence is that of Outer-membrane lipoprotein LolB from Cupriavidus taiwanensis (strain DSM 17343 / BCRC 17206 / CCUG 44338 / CIP 107171 / LMG 19424 / R1) (Ralstonia taiwanensis (strain LMG 19424)).